The primary structure comprises 81 residues: MNEQEIFEKVQTIISEQLGVDKSQVTKDANFANDLGADSLDTVELVMAIEEAFNIEIPDDAAEQISNLQQAVDFISQKVAA.

Residues 4–79 form the Carrier domain; sequence QEIFEKVQTI…QAVDFISQKV (76 aa). The residue at position 39 (serine 39) is an O-(pantetheine 4'-phosphoryl)serine.

It belongs to the acyl carrier protein (ACP) family. Post-translationally, 4'-phosphopantetheine is transferred from CoA to a specific serine of apo-ACP by AcpS. This modification is essential for activity because fatty acids are bound in thioester linkage to the sulfhydryl of the prosthetic group.

Its subcellular location is the plastid. The protein resides in the chloroplast. It participates in lipid metabolism; fatty acid biosynthesis. Carrier of the growing fatty acid chain in fatty acid biosynthesis. In Guillardia theta (Cryptophyte), this protein is Acyl carrier protein.